A 468-amino-acid polypeptide reads, in one-letter code: Argininosuccinate lyase (468 aa).

It belongs to the lyase 1 family. Argininosuccinate lyase subfamily.

The protein localises to the cytoplasm. It carries out the reaction 2-(N(omega)-L-arginino)succinate = fumarate + L-arginine. The protein operates within amino-acid biosynthesis; L-arginine biosynthesis; L-arginine from L-ornithine and carbamoyl phosphate: step 3/3. The protein is Argininosuccinate lyase of Zymomonas mobilis subsp. mobilis (strain ATCC 31821 / ZM4 / CP4).